The sequence spans 728 residues: 1,4-alpha-glucan branching enzyme GlgB (728 aa).

The active-site Nucleophile is D405. E458 serves as the catalytic Proton donor.

It belongs to the glycosyl hydrolase 13 family. GlgB subfamily. In terms of assembly, monomer.

It catalyses the reaction Transfers a segment of a (1-&gt;4)-alpha-D-glucan chain to a primary hydroxy group in a similar glucan chain.. The protein operates within glycan biosynthesis; glycogen biosynthesis. In terms of biological role, catalyzes the formation of the alpha-1,6-glucosidic linkages in glycogen by scission of a 1,4-alpha-linked oligosaccharide from growing alpha-1,4-glucan chains and the subsequent attachment of the oligosaccharide to the alpha-1,6 position. The sequence is that of 1,4-alpha-glucan branching enzyme GlgB from Salmonella typhi.